The following is a 303-amino-acid chain: Mitochondrial carrier homolog 2 (303 aa).

Residue Ala2 is modified to N-acetylalanine. Residues 2–15 (ADAASQVLLGSGLT) lie on the Mitochondrial intermembrane side of the membrane. 2 Solcar repeats span residues 2–98 (ADAA…YQES) and 118–206 (DRVI…INTY). Residues 16-36 (ILSQPLMYVKVLIQVGYEPLP) traverse the membrane as a helical segment. The Cytoplasmic portion of the chain corresponds to 37–77 (PTIGRNIFGRQVCQLPGLFCYAQHIASIDGRRGLFTGLTPR). A helical transmembrane segment spans residues 78-92 (LCSGVLGTVVHGKVL). The Mitochondrial intermembrane segment spans residues 93–135 (QYYQESEKPEELGSVTVQKEYSSSFDRVIKETTREMIARSAAT). The helical transmembrane segment at 136 to 156 (LITHPFHVITLRSMVQFIGRE) threads the bilayer. Residues 157–180 (SKYCGLCDSIVTIYREEGIVGFFA) lie on the Cytoplasmic side of the membrane. A helical membrane pass occupies residues 181–199 (GLIPRLLGDIISLWLCNSL). Residues 200-231 (AYLINTYALDSGVSTMNEMKSYSQAVTGFFAS) are Mitochondrial intermembrane-facing. The helical transmembrane segment at 232 to 252 (MLTYPFVLVSNLMAVNNCGLA) threads the bilayer. Residues 253 to 280 (GGSPPYSPIYTSWIDCWCMLQKAGNMSR) are Cytoplasmic-facing. The chain crosses the membrane as a helical span at residues 281–303 (GNSLFFRKVPCGKTYCYDLRMLI).

This sequence belongs to the mitochondrial carrier (TC 2.A.29) family. In terms of assembly, interacts with p15BID. Expressed in a wide variety of tissues. Predominant expressed in liver, kidney, heart, skeletal muscle and testis.

Its subcellular location is the mitochondrion outer membrane. Its function is as follows. Protein insertase that mediates insertion of transmembrane proteins into the mitochondrial outer membrane. Catalyzes insertion of proteins with alpha-helical transmembrane regions, such as signal-anchored, tail-anchored and multi-pass membrane proteins. Does not mediate insertion of beta-barrel transmembrane proteins. Also acts as a receptor for the truncated form of pro-apoptotic BH3-interacting domain death agonist (p15 BID) and has therefore a critical function in apoptosis. Regulates the quiescence/cycling of hematopoietic stem cells (HSCs). Acts as a regulator of mitochondrial fusion, essential for the naive-to-primed interconversion of embryonic stem cells (ESCs). Acts as a regulator of lipid homeostasis and has a regulatory role in adipocyte differentiation and biology. The sequence is that of Mitochondrial carrier homolog 2 from Mus musculus (Mouse).